Consider the following 503-residue polypeptide: Maturase K (503 aa).

This sequence belongs to the intron maturase 2 family. MatK subfamily.

It localises to the plastid. The protein localises to the chloroplast. Usually encoded in the trnK tRNA gene intron. Probably assists in splicing its own and other chloroplast group II introns. This chain is Maturase K, found in Liquidambar orientalis (Oriental sweet gum).